Reading from the N-terminus, the 524-residue chain is GMP synthase [glutamine-hydrolyzing] (524 aa).

Residues 9–207 (RILILDFSSQ…VIHICQCIPN (199 aa)) enclose the Glutamine amidotransferase type-1 domain. The Nucleophile role is filled by Cys86. Active-site residues include His181 and Glu183. Residues 208-399 (WTTKHIIEDS…LGLPADLIYR (192 aa)) enclose the GMPS ATP-PPase domain. 235-241 (SGGVDSA) serves as a coordination point for ATP.

In terms of assembly, homodimer.

It carries out the reaction XMP + L-glutamine + ATP + H2O = GMP + L-glutamate + AMP + diphosphate + 2 H(+). The protein operates within purine metabolism; GMP biosynthesis; GMP from XMP (L-Gln route): step 1/1. In terms of biological role, catalyzes the synthesis of GMP from XMP. In Coxiella burnetii (strain Dugway 5J108-111), this protein is GMP synthase [glutamine-hydrolyzing].